The sequence spans 322 residues: Nucleoprotein (322 aa).

RNA-binding residues include tyrosine 43, tyrosine 46, valine 76, arginine 122, lysine 240, and serine 269.

This sequence belongs to the tenuiviruses nucleocapsid protein family.

The protein resides in the virion. It localises to the host cytoplasm. Its function is as follows. Encapsidates the genome, protecting it from nucleases. The encapsidated genomic RNA is termed the nucleocapsid (NC), and serves as template for viral transcription and replication. The sequence is that of Nucleoprotein from Avena sativa (Oat).